The primary structure comprises 251 residues: Cytochrome P450 monooxygenase ppzG (251 aa).

Cysteine 250 serves as a coordination point for heme.

It belongs to the cytochrome P450 family. It depends on heme as a cofactor.

The protein operates within secondary metabolite biosynthesis. Its function is as follows. Cytochrome P450 monooxygenase; part of the gene cluster that mediates the biosynthesis of pyrrolopyrazines, secondary metabolites showing insecticidal activity. The role of ppzG within the pathway has still to be determined. The single multifunctional NRPS ppzA is sufficient to produce peramine via condensation of 1-pyrroline-5-carboxylate and arginine, N-methylation of the alpha-amino group of arginine and reduction of the thioester and the cyclization to form an iminium ion resulting in release from the peptide synthetase. Deprotonation of this intermediate and oxidation of the pyrroline ring would give rise to peramine. In Epichloe species that produce only peramine, the peramine synthetase gene is not localized in a gene cluster, in contrast to Metarhizium species that contain additional pyrrolopyrazine biosynthesis genes. The 2-oxoglutarate-Fe(II) type oxidoreductase ppzC hydroxylates peramine to yield the newly identified compound 8-hydroxyperamine whereas ppzD converts L-proline into trans-4-hydroxy-L-proline, a precursor of peramine biosynthesis. This chain is Cytochrome P450 monooxygenase ppzG, found in Metarhizium rileyi (strain RCEF 4871) (Nomuraea rileyi).